A 259-amino-acid chain; its full sequence is Small ribosomal subunit protein eS4 (259 aa).

An S4 RNA-binding domain is found at 41–105; sequence LPLSVLLKER…TDQSFRILYD (65 aa). Thr-248 carries the post-translational modification Phosphothreonine. Position 258 is a phosphoserine (Ser-258).

The protein belongs to the eukaryotic ribosomal protein eS4 family.

The sequence is that of Small ribosomal subunit protein eS4 from Tetrahymena thermophila.